The chain runs to 330 residues: Ketol-acid reductoisomerase (NADP(+)) (330 aa).

Residues 1–181 enclose the KARI N-terminal Rossmann domain; the sequence is MNIYYEQDAD…GGTKAGVIET (181 aa). NADP(+) contacts are provided by residues 24-27, K47, S50, S52, and 82-85; these read YGSQ and DQTQ. H107 is a catalytic residue. An NADP(+)-binding site is contributed by G133. Residues 182-327 form the KARI C-terminal knotted domain; the sequence is SFKDETETDL…AKLRGMMSWL (146 aa). Mg(2+) contacts are provided by D190, E194, E226, and E230. Substrate is bound at residue S251.

This sequence belongs to the ketol-acid reductoisomerase family. Mg(2+) is required as a cofactor.

The catalysed reaction is (2R)-2,3-dihydroxy-3-methylbutanoate + NADP(+) = (2S)-2-acetolactate + NADPH + H(+). It catalyses the reaction (2R,3R)-2,3-dihydroxy-3-methylpentanoate + NADP(+) = (S)-2-ethyl-2-hydroxy-3-oxobutanoate + NADPH + H(+). The protein operates within amino-acid biosynthesis; L-isoleucine biosynthesis; L-isoleucine from 2-oxobutanoate: step 2/4. Its pathway is amino-acid biosynthesis; L-valine biosynthesis; L-valine from pyruvate: step 2/4. In terms of biological role, involved in the biosynthesis of branched-chain amino acids (BCAA). Catalyzes an alkyl-migration followed by a ketol-acid reduction of (S)-2-acetolactate (S2AL) to yield (R)-2,3-dihydroxy-isovalerate. In the isomerase reaction, S2AL is rearranged via a Mg-dependent methyl migration to produce 3-hydroxy-3-methyl-2-ketobutyrate (HMKB). In the reductase reaction, this 2-ketoacid undergoes a metal-dependent reduction by NADPH to yield (R)-2,3-dihydroxy-isovalerate. The sequence is that of Ketol-acid reductoisomerase (NADP(+)) from Chlorobaculum tepidum (strain ATCC 49652 / DSM 12025 / NBRC 103806 / TLS) (Chlorobium tepidum).